The primary structure comprises 77 residues: Subtilisin-chymotrypsin inhibitor CI-1C (77 aa).

This sequence belongs to the protease inhibitor I13 (potato type I serine protease inhibitor) family.

Inhibits both subtilisin and chymotrypsin. The protein is Subtilisin-chymotrypsin inhibitor CI-1C of Hordeum vulgare (Barley).